The primary structure comprises 160 residues: Large ribosomal subunit protein bL19 (160 aa).

Belongs to the bacterial ribosomal protein bL19 family.

In terms of biological role, this protein is located at the 30S-50S ribosomal subunit interface and may play a role in the structure and function of the aminoacyl-tRNA binding site. The polypeptide is Large ribosomal subunit protein bL19 (Prochlorococcus marinus subsp. pastoris (strain CCMP1986 / NIES-2087 / MED4)).